We begin with the raw amino-acid sequence, 383 residues long: Probable endoplasmic reticulum-Golgi intermediate compartment protein 3 (383 aa).

The Cytoplasmic portion of the chain corresponds to 1 to 26; the sequence is MLISQLKKFDAYPKTVDDFRVKTYTG. The helical transmembrane segment at 27–47 threads the bilayer; sequence AIVSIIGGVFILWLFFSQVTL. The Lumenal portion of the chain corresponds to 48-347; the sequence is YFSTDIHHEL…GKSFASFLTN (300 aa). A helical transmembrane segment spans residues 348–368; that stretch reads VCAIIGGVFTVFGIFDSFIYY. Over 369–383 the chain is Cytoplasmic; sequence STKNLQKKIDLGKTF.

It belongs to the ERGIC family.

The protein resides in the endoplasmic reticulum-Golgi intermediate compartment membrane. It localises to the golgi apparatus. Its subcellular location is the cis-Golgi network membrane. The protein localises to the endoplasmic reticulum membrane. Functionally, possible role in transport between endoplasmic reticulum and Golgi. This Dictyostelium discoideum (Social amoeba) protein is Probable endoplasmic reticulum-Golgi intermediate compartment protein 3 (ergic3).